The following is a 450-amino-acid chain: Equilibrative nucleotide transporter 1 (450 aa).

A run of 11 helical transmembrane segments spans residues 63 to 83, 101 to 121, 133 to 153, 168 to 188, 196 to 216, 234 to 254, 300 to 320, 334 to 354, 361 to 381, 394 to 414, and 430 to 450; these read FAYI…NAFI, IFAV…VVFY, LGLL…LVYV, AAVA…IGVA, MQAV…LRIL, LYFA…NVAH, HGFG…GYIT, ILLI…TAVF, IAVG…GCLH, ILTC…MILA, and TVMF…FWVI.

The protein belongs to the SLC29A/ENT transporter (TC 2.A.57) family. As to expression, in young seedlings, expressed in root elongation zone, root cortex, root-hair, at the transition to the shoot and cotyledons. Expressed in hydathodes of fully developed leaves and pollen.

The protein resides in the vacuole membrane. Its function is as follows. Nucleoside transporter involved in adenosine transport and required for nucleotide metabolism which influences growth and pollen germination. Has high affinity for adenosine when expressed in a heterologous system (yeast). The chain is Equilibrative nucleotide transporter 1 (ENT1) from Arabidopsis thaliana (Mouse-ear cress).